The following is a 344-amino-acid chain: DNA-directed RNA polymerase subunit alpha (344 aa).

Residues 1–232 (MGQYTINLRE…HLFLPPFGLE (232 aa)) are alpha N-terminal domain (alpha-NTD). The alpha C-terminal domain (alpha-CTD) stretch occupies residues 270 to 344 (LIKDQFLEYS…KRFGINLKLK (75 aa)).

It belongs to the RNA polymerase alpha chain family. In terms of assembly, in plastids the minimal PEP RNA polymerase catalytic core is composed of four subunits: alpha, beta, beta', and beta''. When a (nuclear-encoded) sigma factor is associated with the core the holoenzyme is formed, which can initiate transcription.

Its subcellular location is the plastid. It is found in the chloroplast. The enzyme catalyses RNA(n) + a ribonucleoside 5'-triphosphate = RNA(n+1) + diphosphate. Functionally, DNA-dependent RNA polymerase catalyzes the transcription of DNA into RNA using the four ribonucleoside triphosphates as substrates. This is DNA-directed RNA polymerase subunit alpha from Spirogyra maxima (Green alga).